The sequence spans 315 residues: High mobility group protein hmg-12 (315 aa).

The interval 57–315 is disordered; the sequence is VKNETDSEAV…AIDAFFDGSD (259 aa). Residues 77–86 show a composition bias toward polar residues; that stretch reads ANDSPANTND. A DNA-binding region (a.T hook 1) is located at residues 118–128; the sequence is PVKKGRGRPIK. 2 stretches are compositionally biased toward low complexity: residues 147–160 and 196–205; these read AQTPAADTDAIDTA and AADTDAIDTA.

Belongs to the HMGA family.

It localises to the nucleus. Functionally, transcriptional regulator. Binds to specific sequence motifs in regulatory elements. May recruit transcription factors, or may induce structural changes in chromatin, to thereby modulate embryonic expression of ATP-dependent chaperone cdc-48.1. The sequence is that of High mobility group protein hmg-12 from Caenorhabditis elegans.